The chain runs to 308 residues: Glycine betaine uptake system ATP-binding protein YehX (308 aa).

In terms of domain architecture, ABC transporter spans 2–235; the sequence is IEFSHVSKLF…PANDFVRQFF (234 aa). Position 34–41 (34–41) interacts with ATP; sequence GTSGSGKS.

This sequence belongs to the ABC transporter superfamily. In terms of assembly, the complex is composed of two ATP-binding proteins (YehX), two transmembrane proteins (YehW and YehY) and a solute-binding protein (YehZ).

The catalysed reaction is glycine betaine(out) + ATP + H2O = glycine betaine(in) + ADP + phosphate + H(+). Its function is as follows. Part of an ABC transporter complex involved in low-affinity glycine betaine uptake. Probably responsible for energy coupling to the transport system. The chain is Glycine betaine uptake system ATP-binding protein YehX (yehX) from Escherichia coli (strain K12).